Reading from the N-terminus, the 134-residue chain is Homeobox protein ceh-5 (134 aa).

Positions 35 to 94 (PKRPRTVFTDEQLEKLEESFNTSGYLSGSTRAKLAESLGLSDNQVKVWFQNRRTKQKKID) form a DNA-binding region, homeobox.

The protein localises to the nucleus. The protein is Homeobox protein ceh-5 (ceh-5) of Caenorhabditis elegans.